The primary structure comprises 117 residues: DNA-directed RNA polymerase subunit omega (117 aa).

This sequence belongs to the RNA polymerase subunit omega family. As to quaternary structure, the RNAP catalytic core consists of 2 alpha, 1 beta, 1 beta' and 1 omega subunit. When a sigma factor is associated with the core the holoenzyme is formed, which can initiate transcription.

It carries out the reaction RNA(n) + a ribonucleoside 5'-triphosphate = RNA(n+1) + diphosphate. Functionally, promotes RNA polymerase assembly. Latches the N- and C-terminal regions of the beta' subunit thereby facilitating its interaction with the beta and alpha subunits. This Ruegeria pomeroyi (strain ATCC 700808 / DSM 15171 / DSS-3) (Silicibacter pomeroyi) protein is DNA-directed RNA polymerase subunit omega.